Reading from the N-terminus, the 269-residue chain is Putative hydro-lyase Aave_3512 (269 aa).

It belongs to the D-glutamate cyclase family.

The protein is Putative hydro-lyase Aave_3512 of Paracidovorax citrulli (strain AAC00-1) (Acidovorax citrulli).